Reading from the N-terminus, the 148-residue chain is Large ribosomal subunit protein uL15 (148 aa).

The span at 1–11 (MSEPIKLHDLR) shows a compositional bias: basic and acidic residues. Residues 1–52 (MSEPIKLHDLRPAAGSNKAKTRVGRGEASKGKTAGRGTKGTKARKQVSAAFE) form a disordered region.

Belongs to the universal ribosomal protein uL15 family. In terms of assembly, part of the 50S ribosomal subunit.

Its function is as follows. Binds to the 23S rRNA. In Corynebacterium glutamicum (strain R), this protein is Large ribosomal subunit protein uL15.